The primary structure comprises 82 residues: ATP synthase subunit c (82 aa).

The next 2 membrane-spanning stretches (helical) occupy residues 5–25 (MSLVAGLIAIGAGIAVGFGAI) and 55–75 (FLIIALAFMETLTIYGLVIAF).

Belongs to the ATPase C chain family. As to quaternary structure, F-type ATPases have 2 components, F(1) - the catalytic core - and F(0) - the membrane proton channel. F(1) has five subunits: alpha(3), beta(3), gamma(1), delta(1), epsilon(1). F(0) has three main subunits: a(1), b(2) and c(10-14). The alpha and beta chains form an alternating ring which encloses part of the gamma chain. F(1) is attached to F(0) by a central stalk formed by the gamma and epsilon chains, while a peripheral stalk is formed by the delta and b chains.

It is found in the cell membrane. Functionally, f(1)F(0) ATP synthase produces ATP from ADP in the presence of a proton or sodium gradient. F-type ATPases consist of two structural domains, F(1) containing the extramembraneous catalytic core and F(0) containing the membrane proton channel, linked together by a central stalk and a peripheral stalk. During catalysis, ATP synthesis in the catalytic domain of F(1) is coupled via a rotary mechanism of the central stalk subunits to proton translocation. In terms of biological role, key component of the F(0) channel; it plays a direct role in translocation across the membrane. A homomeric c-ring of between 10-14 subunits forms the central stalk rotor element with the F(1) delta and epsilon subunits. The sequence is that of ATP synthase subunit c from Carboxydothermus hydrogenoformans (strain ATCC BAA-161 / DSM 6008 / Z-2901).